A 1466-amino-acid polypeptide reads, in one-letter code: ABC transporter C family member 6 (1466 aa).

10 helical membrane passes run 16 to 36 (SVLS…SWLF), 63 to 83 (LVLI…LLSC), 91 to 111 (WPFL…VYLF), 128 to 148 (VWWV…FVLY), 158 to 178 (FVIS…SCLW), 286 to 306 (IVLS…APYL), 322 to 339 (NQGY…LVEC), 400 to 420 (WFMH…WILY), 425 to 445 (LGSI…YPFA), and 512 to 532 (SVLW…CLLL). Positions 286–567 (IVLSALLAFV…LPETISMIVQ (282 aa)) constitute an ABC transmembrane type-1 1 domain. The ABC transporter 1 domain maps to 601–824 (VEISNGTFSW…GTDFMELVGA (224 aa)). 636 to 643 (GTVGSGKS) contributes to the ATP binding site. Residues 840 to 876 (ASEKSTTDKENEVLHHKEKQENGSDNKPSGQLVQEEE) form a disordered region. A compositionally biased stretch (basic and acidic residues) spans 844 to 863 (STTDKENEVLHHKEKQENGS). The next 3 helical transmembrane spans lie at 890-910 (YMAL…QVLF), 937-957 (GFTL…CILI), and 1026-1046 (ILGI…VFIP). The region spanning 900–1182 (IPLILVVQVL…LIWTLCDLEN (283 aa)) is the ABC transmembrane type-1 2 domain. The ABC transporter 2 domain maps to 1219 to 1453 (ITICNLQVRY…RSSLFSKLVA (235 aa)). 1253 to 1260 (GRTGCGKS) contributes to the ATP binding site.

The protein belongs to the ABC transporter superfamily. ABCC family. Conjugate transporter (TC 3.A.1.208) subfamily. In terms of tissue distribution, ubiquitous.

It localises to the membrane. The enzyme catalyses ATP + H2O + xenobioticSide 1 = ADP + phosphate + xenobioticSide 2.. Pump for glutathione S-conjugates. The sequence is that of ABC transporter C family member 6 (ABCC6) from Arabidopsis thaliana (Mouse-ear cress).